Reading from the N-terminus, the 99-residue chain is A-type ATP synthase subunit F (99 aa).

The protein belongs to the V-ATPase F subunit family. As to quaternary structure, has multiple subunits with at least A(3), B(3), C, D, E, F, H, I and proteolipid K(x).

It localises to the cell membrane. In terms of biological role, component of the A-type ATP synthase that produces ATP from ADP in the presence of a proton gradient across the membrane. The polypeptide is A-type ATP synthase subunit F (Methanococcus aeolicus (strain ATCC BAA-1280 / DSM 17508 / OCM 812 / Nankai-3)).